The primary structure comprises 24 residues: FLPAIVGAAGQFLPKIFCAISKKC.

Residues Cys-18 and Cys-24 are joined by a disulfide bond.

As to expression, expressed by the skin glands.

Its subcellular location is the secreted. Functionally, antibacterial activity against Gram-negative bacterium E.coli. The chain is Brevinin-1Sa from Lithobates sphenocephalus (Southern leopard frog).